A 469-amino-acid chain; its full sequence is MTSIDINNLQNTFQQAMNMSGSPGAVCTSPTQSFMNTVPQRLNAVKHPKILKPFSTGDMKILLLENVNQTAITIFEEQGYQVEFYKSSLPEEELIEKIKDVHAIGIRSKTRLTSNVLQHAKNLVCIGCFCIGTNQVDLDYATSRGIAVFNSPFSNSRSVAELVIAEIISLARQLGDRSIELHTGTWNKVAARCWEVRGKTLGIIGYGHIGSQLSVLAEAMGLHVLYYDIVTIMALGTARQVSTLDELLNKSDFVTLHVPATPETEKMLSAPQFAAMKDGAYVINASRGTVVDIPSLIQAVKANKIAGAALDVYPHEPAKNGEGSFNDELNSWTSELVSLPNIILTPHIGGSTEEAQSSIGIEVATALSKYINEGNSVGSVNFPEVALKSLSYDQENTVRVLYIHQNVPGVLKTVNDILSNHNIEKQFSDSNGEIAYLMADISSVDQSDIKDIYEQLNQTSAKISIRLLY.

A phosphoserine mark is found at Ser-22, Ser-29, and Ser-33. NAD(+) is bound by residues 208-209, Asp-228, 285-287, and Asp-311; these read HI and ASR. The active site involves Arg-287. Glu-316 is an active-site residue. His-347 serves as the catalytic Proton donor. 347 to 350 is an NAD(+) binding site; that stretch reads HIGG. Positions 399-469 constitute an ACT domain; the sequence is RVLYIHQNVP…SAKISIRLLY (71 aa).

The protein belongs to the D-isomer specific 2-hydroxyacid dehydrogenase family.

It catalyses the reaction (2R)-3-phosphoglycerate + NAD(+) = 3-phosphooxypyruvate + NADH + H(+). The catalysed reaction is (R)-2-hydroxyglutarate + NAD(+) = 2-oxoglutarate + NADH + H(+). It participates in amino-acid biosynthesis; L-serine biosynthesis; L-serine from 3-phospho-D-glycerate: step 1/3. Functionally, catalyzes the reversible oxidation of 3-phospho-D-glycerate to 3-phosphonooxypyruvate, the first step of the phosphorylated L-serine biosynthesis pathway. Also catalyzes the reversible oxidation of 2-hydroxyglutarate to 2-oxoglutarate. This chain is D-3-phosphoglycerate dehydrogenase 1 (SER3), found in Saccharomyces cerevisiae (strain ATCC 204508 / S288c) (Baker's yeast).